Here is a 145-residue protein sequence, read N- to C-terminus: Large ribosomal subunit protein uL15 (145 aa).

The tract at residues 1 to 55 is disordered; sequence MSLLKTLAPKAGSKHAPKRIGRGIGSGMGGTATKGHKGQLARTGGTVRRGFEGGQ. Residues 12–21 show a composition bias toward basic residues; it reads GSKHAPKRIG. Gly residues predominate over residues 22–32; sequence RGIGSGMGGTA.

The protein belongs to the universal ribosomal protein uL15 family. Part of the 50S ribosomal subunit.

Its function is as follows. Binds to the 23S rRNA. In Bdellovibrio bacteriovorus (strain ATCC 15356 / DSM 50701 / NCIMB 9529 / HD100), this protein is Large ribosomal subunit protein uL15.